The sequence spans 302 residues: Vomeronasal type-1 receptor 48 (302 aa).

The Extracellular portion of the chain corresponds to 1–16; that stretch reads MNENSRLHTHSNIRNT. Residues 17 to 37 traverse the membrane as a helical segment; it reads FFSEIGIGISGNSFLLLFHII. The Cytoplasmic portion of the chain corresponds to 38-49; the sequence is KFFRGHRPRLTD. The chain crosses the membrane as a helical span at residues 50–70; that stretch reads LPIGLLSLIHLLMLLVAAVIA. The Extracellular segment spans residues 71–91; it reads TDIFISWRGWNDIICKFLVYL. The cysteines at positions 85 and 172 are disulfide-linked. Residues 92–114 form a helical membrane-spanning segment; it reads YRSLRGLSLCTTSMLSVLQAIIL. Residues 115–131 lie on the Cytoplasmic side of the membrane; it reads SPRSYCLAKFKRKSSHN. The helical transmembrane segment at 132–152 threads the bilayer; that stretch reads ISCAIIFLSVLYMSISSHLLI. Residues 153 to 193 are Extracellular-facing; that stretch reads SITATPNLTMNDFLYVSQSCSLLPLSYLMQSIYSTLLVLRE. Asn-159 carries an N-linked (GlcNAc...) asparagine glycan. Residues 194–214 traverse the membrane as a helical segment; that stretch reads VFLIGLMVLSTSYMVALLYMH. Residues 215-238 lie on the Cytoplasmic side of the membrane; it reads RKQAQNLQGTSLSLKASAEQRATQ. Residues 239–259 form a helical membrane-spanning segment; the sequence is TILMLMTFFVLMSIFDSIVSC. At 260 to 269 the chain is on the extracellular side; that stretch reads SRTMFLDDPT. Residues 270–290 form a helical membrane-spanning segment; the sequence is SYSIHIFVMHIYATVSPFVFI. At 291-302 the chain is on the cytoplasmic side; that stretch reads STEKHIVNILRG.

Belongs to the G-protein coupled receptor 1 family.

It is found in the cell membrane. Functionally, putative pheromone receptor implicated in the regulation of social and reproductive behavior. The chain is Vomeronasal type-1 receptor 48 (Vmn1r48) from Mus musculus (Mouse).